Consider the following 262-residue polypeptide: Probable carboxylesterase Culp3 (262 aa).

The first 41 residues, 1 to 41 (MNNRPIRLLTSGRAGLGAGALITAVVLLIALGAVWTPVAFA), serve as a signal peptide directing secretion. An intrachain disulfide couples cysteine 44 to cysteine 114. Serine 125 serves as the catalytic Nucleophile. Cysteine 188 and cysteine 195 are oxidised to a cystine. Aspartate 192 is a catalytic residue. Residue histidine 206 is the Proton donor/acceptor of the active site. The tract at residues 241-262 (LPGSVLQMPGTAAPAPESLHGR) is disordered.

Belongs to the cutinase family.

Its subcellular location is the secreted. Functionally, shows weak esterase activity with the p-nitrophenol-linked aliphatic ester pNP-butyrate. Does not exhibit cutinase activity. This is Probable carboxylesterase Culp3 (cut3) from Mycobacterium tuberculosis (strain ATCC 25618 / H37Rv).